The sequence spans 738 residues: Flowering time control protein FCA (738 aa).

The tract at residues 1–118 is disordered; sequence MHRGGDRSTD…RGDHSDHDNR (118 aa). Gly residues-rich tracts occupy residues 52–70 and 81–98; these read RGGG…GGGR and SGGG…GEPG. Over residues 109-118 the composition is skewed to basic and acidic residues; it reads RGDHSDHDNR. RRM domains are found at residues 122–203 and 213–293; these read VKLF…YADG and HKLF…FADP. Disordered regions lie at residues 292–451 and 566–595; these read DPKR…PAQQ and QQSN…IIPS. Residues 301–311 show a composition bias toward gly residues; the sequence is SRGGPAFGGPG. Positions 342–358 are enriched in polar residues; that stretch reads HPSSPRSAPHQFNNFGS. The span at 368 to 377 shows a compositional bias: low complexity; sequence TVTSTTDTAT. Residues 383–401 are compositionally biased toward polar residues; that stretch reads FSGNGSLSSQTAVPSSSHM. The span at 435 to 451 shows a compositional bias: low complexity; that stretch reads QLQNNQQGQPLQGPAQQ. Polar residues predominate over residues 575–595; it reads PTQGQPVQSSNPGAPNAIIPS. In terms of domain architecture, WW spans 609–642; that stretch reads VPLTCNWTEHTSPEGFKYYYNSITRESKWDKPEE. The segment at 670–738 is disordered; sequence MQQLQSPPQA…QSAQERAWKS (69 aa). A compositionally biased stretch (low complexity) spans 683-706; it reads PAMQPVQQIPQAQQGQQQMQMKQQ. Polar residues predominate over residues 723–732; it reads RIQQGIQSAQ.

In terms of assembly, interacts with FY. Binds to SF1, FIK, RPRD1B, OsI_31983 and MADS8.

It is found in the nucleus. Functionally, plays a major role in the promotion of the transition of the vegetative meristem to reproductive development. Required for RNA-mediated chromatin silencing of a range of loci in the genome. Cotranscriptionally recognizes aberrant RNA and marks it for silencing. Controls alternative cleavage and polyadenylation on pre-mRNAs and antisense RNAs. Regulates flowering time, seed size and cell volume, probably via the modulation of cell size. The polypeptide is Flowering time control protein FCA (Oryza sativa subsp. indica (Rice)).